The sequence spans 110 residues: UPF0060 membrane protein SACE_5620 (110 aa).

The next 4 helical transmembrane spans lie at 8–28 (VVLF…VWQG), 34–54 (GLLW…VATF), 63–83 (ILAA…VVVD), and 89–109 (RWDL…MYAP).

The protein belongs to the UPF0060 family.

The protein localises to the cell membrane. This chain is UPF0060 membrane protein SACE_5620, found in Saccharopolyspora erythraea (strain ATCC 11635 / DSM 40517 / JCM 4748 / NBRC 13426 / NCIMB 8594 / NRRL 2338).